The chain runs to 433 residues: Acetyl-CoA-benzylalcohol acetyltransferase (433 aa).

Catalysis depends on proton acceptor residues histidine 152 and aspartate 377.

Belongs to the plant acyltransferase family.

The catalysed reaction is benzyl alcohol + acetyl-CoA = benzyl acetate + CoA. The enzyme catalyses (E)-cinnamyl alcohol + acetyl-CoA = (E)-cinnamyl acetate + CoA. Functionally, involved in the biosynthesis of benzyl acetate, a major constituent of the floral scent. Can use benzylalcohol, cinnamylalcohol, 3-cis-hexene-1-ol or heptanol as substrates. Has some activity with 2-phenylethanol and 2-naphtalene-ethanol. The chain is Acetyl-CoA-benzylalcohol acetyltransferase (BEAT) from Clarkia breweri (Fairy fans).